The chain runs to 308 residues: General transcription factor IIH subunit 3 (308 aa).

The segment at 268-285 adopts a C4-type zinc-finger fold; the sequence is CSVCLSIFCNFSPICTTC.

This sequence belongs to the TFB4 family. Part of a TFIID-containing RNA polymerase II pre-initiation complex that is composed of TBP and at least GTF2A1, GTF2A2, GTF2E1, GTF2E2, GTF2F1, GTF2H2, GTF2H3, GTF2H4, GTF2H5, GTF2B, TCEA1, ERCC2, ERCC3, TAF1, TAF2, TAF3, TAF4, TAF5, TAF6, TAF7, TAF8, TAF9, TAF10, TAF11, TAF12 and TAF13. Component of the 7-subunit TFIIH core complex composed of XPB/ERCC3, XPD/ERCC2, GTF2H1, GTF2H2, GTF2H3, GTF2H4 and GTF2H5, which is active in NER. The core complex associates with the 3-subunit CDK-activating kinase (CAK) module composed of CCNH/cyclin H, CDK7 and MNAT1 to form the 10-subunit holoenzyme (holo-TFIIH) active in transcription. Interacts with RARA; the interaction requires prior phosphorylation of RARA on 'Ser-369' which then enhances interaction of RARA with CDK7.

It is found in the nucleus. Its function is as follows. Component of the general transcription and DNA repair factor IIH (TFIIH) core complex, which is involved in general and transcription-coupled nucleotide excision repair (NER) of damaged DNA and, when complexed to CAK, in RNA transcription by RNA polymerase II. In NER, TFIIH acts by opening DNA around the lesion to allow the excision of the damaged oligonucleotide and its replacement by a new DNA fragment. In transcription, TFIIH has an essential role in transcription initiation. When the pre-initiation complex (PIC) has been established, TFIIH is required for promoter opening and promoter escape. Phosphorylation of the C-terminal tail (CTD) of the largest subunit of RNA polymerase II by the kinase module CAK controls the initiation of transcription. The sequence is that of General transcription factor IIH subunit 3 (GTF2H3) from Homo sapiens (Human).